Here is a 251-residue protein sequence, read N- to C-terminus: 3-deoxy-manno-octulosonate cytidylyltransferase (251 aa).

It belongs to the KdsB family.

Its subcellular location is the cytoplasm. It catalyses the reaction 3-deoxy-alpha-D-manno-oct-2-ulosonate + CTP = CMP-3-deoxy-beta-D-manno-octulosonate + diphosphate. The protein operates within nucleotide-sugar biosynthesis; CMP-3-deoxy-D-manno-octulosonate biosynthesis; CMP-3-deoxy-D-manno-octulosonate from 3-deoxy-D-manno-octulosonate and CTP: step 1/1. It functions in the pathway bacterial outer membrane biogenesis; lipopolysaccharide biosynthesis. Its function is as follows. Activates KDO (a required 8-carbon sugar) for incorporation into bacterial lipopolysaccharide in Gram-negative bacteria. This is 3-deoxy-manno-octulosonate cytidylyltransferase from Brucella canis (strain ATCC 23365 / NCTC 10854 / RM-666).